Here is a 66-residue protein sequence, read N- to C-terminus: Large ribosomal subunit protein bL35 (66 aa).

Positions 1 to 42 (MPKQKTHRASAKRFKRTANGGLKRHHAYTGHRFHGKTKKQRR) are disordered.

It belongs to the bacterial ribosomal protein bL35 family.

This is Large ribosomal subunit protein bL35 from Lactobacillus gasseri (strain ATCC 33323 / DSM 20243 / BCRC 14619 / CIP 102991 / JCM 1131 / KCTC 3163 / NCIMB 11718 / NCTC 13722 / AM63).